Consider the following 189-residue polypeptide: HTH-type transcriptional regulator Hpr (189 aa).

In terms of domain architecture, HTH marR-type spans 12–156 (ALLYSHKIVQ…ISAIVRRLYG (145 aa)). Positions 62-85 (ISEIAKYGVMHVSTAFNFSKKLED) form a DNA-binding region, H-T-H motif.

Homodimer.

In terms of biological role, negative regulator of protease production and sporulation. In Exiguobacterium sibiricum (strain DSM 17290 / CCUG 55495 / CIP 109462 / JCM 13490 / 255-15), this protein is HTH-type transcriptional regulator Hpr.